Consider the following 254-residue polypeptide: 3-deoxy-manno-octulosonate cytidylyltransferase (254 aa).

This sequence belongs to the KdsB family.

The protein resides in the cytoplasm. The catalysed reaction is 3-deoxy-alpha-D-manno-oct-2-ulosonate + CTP = CMP-3-deoxy-beta-D-manno-octulosonate + diphosphate. Its pathway is nucleotide-sugar biosynthesis; CMP-3-deoxy-D-manno-octulosonate biosynthesis; CMP-3-deoxy-D-manno-octulosonate from 3-deoxy-D-manno-octulosonate and CTP: step 1/1. It functions in the pathway bacterial outer membrane biogenesis; lipopolysaccharide biosynthesis. Functionally, activates KDO (a required 8-carbon sugar) for incorporation into bacterial lipopolysaccharide in Gram-negative bacteria. This is 3-deoxy-manno-octulosonate cytidylyltransferase from Pseudoalteromonas atlantica (strain T6c / ATCC BAA-1087).